The sequence spans 221 residues: Cytochrome c biogenesis ATP-binding export protein CcmA (221 aa).

An ABC transporter domain is found at 14 to 221; that stretch reads LACHDVSCLR…FDLLDESHFS (208 aa). 46 to 53 is an ATP binding site; that stretch reads GANGIGKS.

This sequence belongs to the ABC transporter superfamily. CcmA exporter (TC 3.A.1.107) family. In terms of assembly, the complex is composed of two ATP-binding proteins (CcmA) and two transmembrane proteins (CcmB).

It is found in the cell inner membrane. It carries out the reaction heme b(in) + ATP + H2O = heme b(out) + ADP + phosphate + H(+). Part of the ABC transporter complex CcmAB involved in the biogenesis of c-type cytochromes; once thought to export heme, this seems not to be the case, but its exact role is uncertain. Responsible for energy coupling to the transport system. This is Cytochrome c biogenesis ATP-binding export protein CcmA from Zymomonas mobilis subsp. mobilis (strain ATCC 31821 / ZM4 / CP4).